The sequence spans 466 residues: 3-isopropylmalate dehydratase large subunit (466 aa).

Positions 347, 407, and 410 each coordinate [4Fe-4S] cluster.

The protein belongs to the aconitase/IPM isomerase family. LeuC type 1 subfamily. In terms of assembly, heterodimer of LeuC and LeuD. The cofactor is [4Fe-4S] cluster.

The catalysed reaction is (2R,3S)-3-isopropylmalate = (2S)-2-isopropylmalate. Its pathway is amino-acid biosynthesis; L-leucine biosynthesis; L-leucine from 3-methyl-2-oxobutanoate: step 2/4. In terms of biological role, catalyzes the isomerization between 2-isopropylmalate and 3-isopropylmalate, via the formation of 2-isopropylmaleate. The polypeptide is 3-isopropylmalate dehydratase large subunit (Escherichia fergusonii (strain ATCC 35469 / DSM 13698 / CCUG 18766 / IAM 14443 / JCM 21226 / LMG 7866 / NBRC 102419 / NCTC 12128 / CDC 0568-73)).